We begin with the raw amino-acid sequence, 83 residues long: MSTLRELRLRRALKEQSMKYRLSIKKTLPRWKGALIGLFLICVRTISGSGSESNLPEPPKVSVDSSLMIEPNLTTEMLNVFSQ.

The first 50 residues, Met-1–Gly-50, serve as a signal peptide directing secretion.

It belongs to the T7likevirus o-spanin family. Homodimer. Interacts (via C-terminus) with the spanin inner membrane subunit (via C-terminus). Part of the spanin complex which spans the entire periplasmic space. The spanin complex is composed of spanin inner membrane subunit and spanin outer membrane subunit.

Its subcellular location is the host cell outer membrane. Component of the spanin complex that disrupts the host outer membrane and participates in cell lysis during virus exit. The spanin complex conducts the final step in host lysis by disrupting the outer membrane after holin and endolysin action have permeabilized the inner membrane and degraded the host peptidoglycans. Host outer membrane disruption is possibly due to local fusion between the inner and outer membrane performed by the spanin complex. This is Spanin, outer lipoprotein subunit (18.7) from Escherichia coli (Bacteriophage T3).